Reading from the N-terminus, the 183-residue chain is Probable apo-citrate lyase phosphoribosyl-dephospho-CoA transferase (183 aa).

The protein belongs to the CitX family.

It catalyses the reaction apo-[citrate lyase ACP] + 2'-(5''-triphospho-alpha-D-ribosyl)-3'-dephospho-CoA = holo-[citrate lyase ACP] + diphosphate. Functionally, transfers 2-(5''-triphosphoribosyl)-3'-dephosphocoenzyme-A on a serine residue to the apo-acyl carrier protein (gamma chain) of the citrate lyase to yield holo-acyl carrier protein. In Escherichia coli (strain 55989 / EAEC), this protein is Probable apo-citrate lyase phosphoribosyl-dephospho-CoA transferase.